Consider the following 184-residue polypeptide: NADH-quinone oxidoreductase subunit B (184 aa).

Residues C37, C38, C103, and C132 each contribute to the [4Fe-4S] cluster site.

The protein belongs to the complex I 20 kDa subunit family. NDH-1 is composed of 14 different subunits. Subunits NuoB, C, D, E, F, and G constitute the peripheral sector of the complex. [4Fe-4S] cluster serves as cofactor.

It localises to the cell membrane. It catalyses the reaction a quinone + NADH + 5 H(+)(in) = a quinol + NAD(+) + 4 H(+)(out). Its function is as follows. NDH-1 shuttles electrons from NADH, via FMN and iron-sulfur (Fe-S) centers, to quinones in the respiratory chain. The immediate electron acceptor for the enzyme in this species is believed to be a menaquinone. Couples the redox reaction to proton translocation (for every two electrons transferred, four hydrogen ions are translocated across the cytoplasmic membrane), and thus conserves the redox energy in a proton gradient. The protein is NADH-quinone oxidoreductase subunit B of Rhodococcus opacus (strain B4).